The primary structure comprises 185 residues: ATP synthase subunit b 2 (185 aa).

A disordered region spans residues 1–24 (MADSHGNAKGATAHTEAGGGHKAP). A helical membrane pass occupies residues 34–56 (ASQLVSLTIAFVALYLISSRLAL).

The protein belongs to the ATPase B chain family. F-type ATPases have 2 components, F(1) - the catalytic core - and F(0) - the membrane proton channel. F(1) has five subunits: alpha(3), beta(3), gamma(1), delta(1), epsilon(1). F(0) has three main subunits: a(1), b(2) and c(10-14). The alpha and beta chains form an alternating ring which encloses part of the gamma chain. F(1) is attached to F(0) by a central stalk formed by the gamma and epsilon chains, while a peripheral stalk is formed by the delta and b chains.

Its subcellular location is the cell inner membrane. In terms of biological role, f(1)F(0) ATP synthase produces ATP from ADP in the presence of a proton or sodium gradient. F-type ATPases consist of two structural domains, F(1) containing the extramembraneous catalytic core and F(0) containing the membrane proton channel, linked together by a central stalk and a peripheral stalk. During catalysis, ATP synthesis in the catalytic domain of F(1) is coupled via a rotary mechanism of the central stalk subunits to proton translocation. Functionally, component of the F(0) channel, it forms part of the peripheral stalk, linking F(1) to F(0). The b'-subunit is a diverged and duplicated form of b found in plants and photosynthetic bacteria. This chain is ATP synthase subunit b 2 (atpF2), found in Nitrobacter hamburgensis (strain DSM 10229 / NCIMB 13809 / X14).